Reading from the N-terminus, the 158-residue chain is 2S seed storage albumin protein (158 aa).

Positions 1-21 (MTKFTILLISLLFCIAHTCSA) are cleaved as a signal peptide. The short motif at 54–56 (RGD) is the Cell attachment site element. A propeptide spanning residues 65–81 (NHILRTMRGRINYIRRN) is cleaved from the precursor.

The protein belongs to the 2S seed storage albumins family. In terms of assembly, the protein consists of two chains linked by 2 disulfide bonds. Expressed in cotyledons. Maximal expression in parenchyma cells undergoing DNA endoreduplication and cell expansion but not in actively dividing cells of the cotyledon.

In terms of biological role, this is a 2S seed storage protein. Its function is as follows. Binds to mammalian chromatin, preventing the normal formation of the kinetochore complex in the centromere and leading to the disruption of mitosis. This is 2S seed storage albumin protein from Glycine max (Soybean).